Consider the following 75-residue polypeptide: Small ribosomal subunit protein bS16c (75 aa).

This sequence belongs to the bacterial ribosomal protein bS16 family.

It is found in the plastid. Its subcellular location is the chloroplast. The protein is Small ribosomal subunit protein bS16c of Cyanidium caldarium (Red alga).